A 1177-amino-acid polypeptide reads, in one-letter code: DNA-directed RNA polymerase subunit beta (1177 aa).

The span at 1147 to 1161 shows a compositional bias: acidic residues; the sequence is DDTEIEMRDTEDDDD. A disordered region spans residues 1147–1177; the sequence is DDTEIEMRDTEDDDDHQSADKLNVEVETTKE. Residues 1162–1177 show a composition bias toward basic and acidic residues; the sequence is HQSADKLNVEVETTKE.

Belongs to the RNA polymerase beta chain family. The RNAP catalytic core consists of 2 alpha, 1 beta, 1 beta' and 1 omega subunit. When a sigma factor is associated with the core the holoenzyme is formed, which can initiate transcription.

It catalyses the reaction RNA(n) + a ribonucleoside 5'-triphosphate = RNA(n+1) + diphosphate. DNA-dependent RNA polymerase catalyzes the transcription of DNA into RNA using the four ribonucleoside triphosphates as substrates. The protein is DNA-directed RNA polymerase subunit beta of Bacillus thuringiensis (strain Al Hakam).